The sequence spans 158 residues: Molybdopterin synthase catalytic subunit (158 aa).

Substrate-binding positions include 107-108 (HR), Lys-123, and 130-132 (KKE).

It belongs to the MoaE family. MOCS2B subfamily. As to quaternary structure, heterotetramer; composed of 2 small (mocs2s) and 2 large (mocs2l) subunits.

Its subcellular location is the cytoplasm. It carries out the reaction 2 [molybdopterin-synthase sulfur-carrier protein]-C-terminal-Gly-aminoethanethioate + cyclic pyranopterin phosphate + H2O = molybdopterin + 2 [molybdopterin-synthase sulfur-carrier protein]-C-terminal Gly-Gly + 2 H(+). The protein operates within cofactor biosynthesis; molybdopterin biosynthesis. Its function is as follows. Catalytic subunit of the molybdopterin synthase complex, a complex that catalyzes the conversion of precursor Z into molybdopterin. Acts by mediating the incorporation of 2 sulfur atoms from thiocarboxylated mocs2s into precursor Z to generate a dithiolene group. This is Molybdopterin synthase catalytic subunit (mocs2l) from Dictyostelium discoideum (Social amoeba).